Reading from the N-terminus, the 573-residue chain is 60 kDa heat shock protein, mitochondrial (573 aa).

A mitochondrion-targeting transit peptide spans methionine 1 to tyrosine 26. Lysine 31 carries the N6-succinyllysine modification. 2 positions are modified to phosphoserine: serine 67 and serine 70. Lysine 75 provides a ligand contact to ATP. Lysine 75 carries the post-translational modification N6-acetyllysine. Lysine 82 carries the post-translational modification N6-acetyllysine; alternate. Lysine 82 carries the N6-succinyllysine; alternate modification. An N6-acetyllysine modification is found at lysine 87. Residue tyrosine 90 is modified to Phosphotyrosine. Lysine 91 bears the N6-acetyllysine mark. Residue aspartate 111–threonine 115 participates in ATP binding. At lysine 125 the chain carries N6-acetyllysine; alternate. Position 125 is an N6-succinyllysine; alternate (lysine 125). At lysine 130 the chain carries N6-acetyllysine. Lysine 133 is modified (N6-acetyllysine; alternate). Lysine 133 carries the post-translational modification N6-succinyllysine; alternate. The residue at position 133 (lysine 133) is an N6-malonyllysine; alternate. Lysine 156 is subject to N6-acetyllysine. Residues lysine 191, lysine 202, lysine 205, lysine 218, and lysine 236 each carry the N6-acetyllysine; alternate modification. Lysine 191, lysine 202, lysine 205, lysine 218, and lysine 236 each carry N6-succinyllysine; alternate. Lysine 249 carries the post-translational modification N6-acetyllysine. Position 250 is an N6-acetyllysine; alternate (lysine 250). Lysine 250 is modified (N6-succinyllysine; alternate). N6-acetyllysine occurs at positions 269 and 292. Lysine 301 bears the N6-succinyllysine mark. Residue lysine 314 is modified to N6-acetyllysine. Lysine 352 carries the N6-acetyllysine; alternate modification. Lysine 352 carries the N6-succinyllysine; alternate modification. N6-acetyllysine is present on residues lysine 359 and lysine 389. Lysine 396 bears the N6-acetyllysine; alternate mark. The residue at position 396 (lysine 396) is an N6-succinyllysine; alternate. Serine 410 is modified (phosphoserine). Glycine 440 is an ATP binding site. Residue lysine 469 is modified to N6-acetyllysine. Lysine 481 carries the N6-acetyllysine; alternate modification. Lysine 481 carries the post-translational modification N6-succinyllysine; alternate. Position 488 is a phosphoserine (serine 488). Aspartate 520 serves as a coordination point for ATP. Residue lysine 551 forms a Glycyl lysine isopeptide (Lys-Gly) (interchain with G-Cter in SUMO2) linkage.

Belongs to the chaperonin (HSP60) family. As to quaternary structure, homoheptamer arranged in a ring structure. The functional units of these chaperonins consist of heptameric rings of the large subunit Hsp60, which function as a back-to-back double ring. Interacts with 2 heptameric Hsp10 rings to form the symmetrical football complex. Interacts with HRAS. Interacts with ATAD3A. Interacts with ETFBKMT and EEF1AKMT3. Interacts with MFHAS1. (Microbial infection) Interacts with hepatitis B virus/HBV protein X. In terms of assembly, (Microbial infection) Interacts with HTLV-1 protein p40tax.

The protein resides in the mitochondrion matrix. The catalysed reaction is ATP + H2O + a folded polypeptide = ADP + phosphate + an unfolded polypeptide.. Chaperonin implicated in mitochondrial protein import and macromolecular assembly. Together with Hsp10, facilitates the correct folding of imported proteins. May also prevent misfolding and promote the refolding and proper assembly of unfolded polypeptides generated under stress conditions in the mitochondrial matrix. The functional units of these chaperonins consist of heptameric rings of the large subunit Hsp60, which function as a back-to-back double ring. In a cyclic reaction, Hsp60 ring complexes bind one unfolded substrate protein per ring, followed by the binding of ATP and association with 2 heptameric rings of the co-chaperonin Hsp10. This leads to sequestration of the substrate protein in the inner cavity of Hsp60 where, for a certain period of time, it can fold undisturbed by other cell components. Synchronous hydrolysis of ATP in all Hsp60 subunits results in the dissociation of the chaperonin rings and the release of ADP and the folded substrate protein. The protein is 60 kDa heat shock protein, mitochondrial (HSPD1) of Homo sapiens (Human).